A 723-amino-acid chain; its full sequence is DNA-binding protein RFX2 (723 aa).

Residues 1–46 (MQNSEGGADSPASVALRPSAAAPPVPASPQRVLVQAASSAPKGAQM) form a disordered region. The span at 10-20 (SPASVALRPSA) shows a compositional bias: low complexity. Ser28 is subject to Phosphoserine. Positions 199-274 (HLQWLLDNYE…YHYYGIRLKP (76 aa)) form a DNA-binding region, RFX-type winged-helix. Residues 292–332 (QQPMHQKPRYRPAQKTDSLGDSGSHSSLHSTPEQTMAAQSQ) are disordered. Residues 307–322 (TDSLGDSGSHSSLHST) are compositionally biased toward low complexity. Polar residues predominate over residues 323–332 (PEQTMAAQSQ). Ser416 carries the post-translational modification Phosphoserine. The segment at 689–723 (GDERRGSEAGPDAHSLGEPLVKRERSDPNHSLQGI) is disordered.

It belongs to the RFX family. In terms of assembly, homodimer; probably only forms homodimers in testis. Heterodimer; heterodimerizes with RFX1 and RFX3.

It is found in the nucleus. Its subcellular location is the cytoplasm. Its function is as follows. Transcription factor that acts as a key regulator of spermatogenesis. Acts by regulating expression of genes required for the haploid phase during spermiogenesis, such as genes required for cilium assembly and function. Recognizes and binds the X-box, a regulatory motif with DNA sequence 5'-GTNRCC(0-3N)RGYAAC-3' present on promoters. Probably activates transcription of the testis-specific histone gene H1-6. The sequence is that of DNA-binding protein RFX2 (RFX2) from Macaca fascicularis (Crab-eating macaque).